We begin with the raw amino-acid sequence, 177 residues long: Large ribosomal subunit protein uL10 (177 aa).

It belongs to the universal ribosomal protein uL10 family. As to quaternary structure, part of the ribosomal stalk of the 50S ribosomal subunit. The N-terminus interacts with L11 and the large rRNA to form the base of the stalk. The C-terminus forms an elongated spine to which L12 dimers bind in a sequential fashion forming a multimeric L10(L12)X complex.

Functionally, forms part of the ribosomal stalk, playing a central role in the interaction of the ribosome with GTP-bound translation factors. This Leptospira biflexa serovar Patoc (strain Patoc 1 / Ames) protein is Large ribosomal subunit protein uL10.